We begin with the raw amino-acid sequence, 119 residues long: UPF0342 protein GK0640 (119 aa).

It belongs to the UPF0342 family.

The sequence is that of UPF0342 protein GK0640 from Geobacillus kaustophilus (strain HTA426).